The following is a 306-amino-acid chain: Glutaminase (306 aa).

Substrate is bound by residues Ser-64, Asn-115, Glu-159, Asn-166, Tyr-190, Tyr-242, and Val-260.

The protein belongs to the glutaminase family. In terms of assembly, homotetramer.

It catalyses the reaction L-glutamine + H2O = L-glutamate + NH4(+). The polypeptide is Glutaminase (Aliivibrio salmonicida (strain LFI1238) (Vibrio salmonicida (strain LFI1238))).